The primary structure comprises 246 residues: Protein phosphatase PhpP (246 aa).

The 239-residue stretch at 2–240 folds into the PPM-type phosphatase domain; the sequence is EISLLTDVGQ…DNITVALVSM (239 aa). Mn(2+)-binding residues include Asp-36, Gly-37, Asp-192, and Asp-231.

The protein belongs to the PP2C family. It depends on Mn(2+) as a cofactor.

It localises to the cytoplasm. It carries out the reaction O-phospho-L-seryl-[protein] + H2O = L-seryl-[protein] + phosphate. The enzyme catalyses O-phospho-L-threonyl-[protein] + H2O = L-threonyl-[protein] + phosphate. Functionally, protein phosphatase able to dephosphorylate StkP-P and other phosphorylated protein substrates. PhpP and its cognate protein kinase StkP appear to constitute a functional signaling couple in vivo, PhpP's primary role being probably to control phosphorylation levels of StkP and of its targets. PhpP thus performs an essential control of StkP activity. Also dephosphorylates DivIVA in vivo. In Streptococcus pneumoniae serotype 2 (strain D39 / NCTC 7466), this protein is Protein phosphatase PhpP (phpP).